Consider the following 60-residue polypeptide: Sperm protamine P1 (60 aa).

The tract at residues Met-1–Tyr-60 is disordered.

Belongs to the protamine P1 family. In terms of tissue distribution, testis.

It is found in the nucleus. Its subcellular location is the chromosome. Functionally, protamines substitute for histones in the chromatin of sperm during the haploid phase of spermatogenesis. They compact sperm DNA into a highly condensed, stable and inactive complex. In Phascolarctos cinereus (Koala), this protein is Sperm protamine P1 (PRM1).